Consider the following 186-residue polypeptide: Elongation factor P (186 aa).

Belongs to the elongation factor P family.

It localises to the cytoplasm. Its pathway is protein biosynthesis; polypeptide chain elongation. Involved in peptide bond synthesis. Stimulates efficient translation and peptide-bond synthesis on native or reconstituted 70S ribosomes in vitro. Probably functions indirectly by altering the affinity of the ribosome for aminoacyl-tRNA, thus increasing their reactivity as acceptors for peptidyl transferase. In Streptococcus thermophilus (strain CNRZ 1066), this protein is Elongation factor P.